The chain runs to 110 residues: Snake venom vascular endothelial growth factor toxin ICPP (110 aa).

Residue glutamine 1 is modified to Pyrrolidone carboxylic acid. 3 disulfide bridges follow: cysteine 14–cysteine 56, cysteine 45–cysteine 91, and cysteine 49–cysteine 93.

As to quaternary structure, homodimer; disulfide-linked. Interacts with high affinity with KDR/VEGFR-2, and with a lower affinity with neuropilin-1 (NRP1) and neuropilin-2 (NRP2). As to expression, expressed by the venom gland.

The protein localises to the secreted. In terms of biological role, snake venom VEGFs may contribute to venom dispersion and prey subjugation by inducing vascular permeability and hypotension. This protein increases vascular permeability and angiogenesis probably through VEGF receptor (KDR/VEGFR-2) signaling. Induces DNA synthesis in human umbilical vein endothelial cells, and promotes mouse embryonic stem cell proliferation and differentiation. It may also induce a drastic hypotensive effect after intravenous injection. The hypotension is mediated by nitric oxide (NO), which is produced by VEGF-activated endothelium NO synthase. The polypeptide is Snake venom vascular endothelial growth factor toxin ICPP (Macrovipera lebetinus (Levantine viper)).